A 67-amino-acid polypeptide reads, in one-letter code: UPF0337 protein SP_1805 (67 aa).

The interval 1-30 is disordered; sequence MSVEEKLNQAKGSIKEGVGKAIGDEKMEKE.

The protein belongs to the UPF0337 (CsbD) family.

This Streptococcus pneumoniae serotype 4 (strain ATCC BAA-334 / TIGR4) protein is UPF0337 protein SP_1805.